We begin with the raw amino-acid sequence, 970 residues long: Polycystin-2 (970 aa).

The segment covering 1 to 11 has biased composition (polar residues); the sequence is MVNSSRVQPQQ. Residues 1 to 182 are disordered; it reads MVNSSRVQPQ…GDPLHRHLPL (182 aa). The Cytoplasmic portion of the chain corresponds to 1-221; that stretch reads MVNSSRVQPQ…STDREKYLKS (221 aa). Over residues 25–45 the composition is skewed to low complexity; it reads GPGRLMAGGAIAGAGLAAPGG. Basic and acidic residues predominate over residues 47–60; the sequence is REQRGLEIEMERIR. Low complexity predominate over residues 62–83; the sequence is AAARDPPAGASASPSPPLSSCS. Phosphoserine occurs at positions 76 and 80. Acidic residues predominate over residues 95-109; the sequence is EAEEEEEEEEVEGEE. Over residues 125-138 the composition is skewed to low complexity; it reads RRSASSSAVSSAGA. Arg-139 carries the post-translational modification Omega-N-methylarginine. A compositionally biased stretch (gly residues) spans 139–148; it reads RGRGLGGYHG. Residues 222–243 traverse the membrane as a helical segment; that stretch reads VLRELATYLLFLIVLCILTYGM. Topologically, residues 244-470 are extracellular; that stretch reads MSSSVYYYTR…PVKLIRYVTT (227 aa). N-linked (GlcNAc...) asparagine glycans are attached at residues Asn-301, Asn-307, and Asn-330. A disulfide bridge links Cys-333 with Cys-346. N-linked (GlcNAc...) asparagine glycans are attached at residues Asn-364 and Asn-377. A helical membrane pass occupies residues 471-491; the sequence is FDFFLAACEIIFCLFILYYVV. The Cytoplasmic portion of the chain corresponds to 492–507; it reads EEILEIRIHKLHYFRS. A helical membrane pass occupies residues 508–528; the sequence is FWNCLDVVIIVLSVVAIGINI. Over 529-554 the chain is Extracellular; the sequence is YRTSNVEALLQFLEDQNTFPNFENLA. A helical transmembrane segment spans residues 555–575; sequence YWQTQFNNIAAVIVFFVWIKL. Gln-559 is a cholesterol binding site. Topologically, residues 576 to 599 are cytoplasmic; that stretch reads FKFINFNRTMSQLSTTMSRCAKDL. Residues 600 to 621 traverse the membrane as a helical segment; the sequence is FGFAIMFFIIFLAYAQLAYLVF. At 622 to 633 the chain is on the extracellular side; sequence GTQVDDFSTFQE. An intramembrane region (pore-forming) is located at residues 634 to 648; that stretch reads CIFTQFRIILGDINF. Leu-643 lines the Ca(2+) pocket. The Selectivity filter motif lies at 643-645; the sequence is LGD. Residues 649–656 lie on the Extracellular side of the membrane; the sequence is AEIEEANR. Residues 657–677 form a helical membrane-spanning segment; the sequence is VLGPIYFTTFVFFMFFILLNM. Residues 678–970 lie on the Cytoplasmic side of the membrane; it reads FLAIINDTYS…GGNGSANIHV (293 aa). Residues 750–785 form the EF-hand domain; that stretch reads KGHTDAEIEAIFTKYDQDGDQELTEHEHQQMRDDLE. Residues Asp-765, Asp-767, Asp-769, Glu-771, and Glu-776 each coordinate Ca(2+). The segment at 766–833 is disordered; the sequence is QDGDQELTEH…HSSRRRGSIS (68 aa). Over residues 772-797 the composition is skewed to basic and acidic residues; sequence LTEHEHQQMRDDLEKEREDLDLDHSS. The segment covering 798 to 809 has biased composition (low complexity); that stretch reads LPRPMSSRSFPR. A phosphoserine mark is found at Ser-803, Ser-810, Ser-814, and Ser-831. The linker stretch occupies residues 805 to 824; that stretch reads RSFPRSLDDSEEEDDDDSGH. The segment at 812–823 is important for interaction with PACS1 and PACS2; it reads DDSEEEDDDDSG. Residues 835-874 adopt a coiled-coil conformation; that stretch reads GVSYEEFQVLVRRVDRMEHSIGSIVSKIDAVIVKLEIMER. Residues 921–970 form a disordered region; it reads DDAASQISHGLGTPLGLNGQPRPRSSRPSSSQSTEGMEGGGGNGSANIHV. The span at 940–956 shows a compositional bias: low complexity; it reads QPRPRSSRPSSSQSTEG.

It belongs to the polycystin family. In terms of assembly, homotetramer. Component of the heterotetrameric polycystin channel complex with PKD1; the tetramer contains one PKD1 chain and three PKD2 chains. Isoform 1 interacts with PKD1 while isoform 3 does not. Interacts with PKD1L1; probably forms a Ca(2+) channel. Interacts with CD2AP. Interacts with HAX1. Interacts with NEK8. Part of a complex containing AKAP5, ADCY5, ADCY6 and PDE4C. Interacts (via C-terminus) with TRPV4 (via C-terminus). Interacts (via C-terminal acidic region) with PACS1 and PACS2; these interactions retain the protein in the endoplasmic reticulum and prevent trafficking to the cell membrane. Interacts with TMEM33. Form a heterotetramer with TRPC1 with a 2:2 stoichiometry; has distinct channel properties separate from PKD2 or TRPC1 homomers alone. Interacts with TMEM120A; TMEM120A inhibits PKD2 channel activity through the physical association of PKD2 with TMEM120A. Interacts (via N-terminus) with RYR2; regulates RYR2 channel activity. N-glycosylated. The four subunits in a tetramer probably differ in the extent of glycosylation; simultaneous glycosylation of all experimentally validated sites would probably create steric hindrance. In terms of processing, phosphorylated. Phosphorylation is important for protein function; a mutant that lacks the N-terminal phosphorylation sites cannot complement a zebrafish pkd2-deficient mutant. PKD-mediated phosphorylation at the C-terminus regulates its function in the release of Ca(2+) stores from the endoplasmic reticulum. Phosphorylation at Ser-814 regulates PKD2 trafficking. Phosphorylation at Ser-76 is required for PKD2 trafficking to or retention at the lateral plasma membrane. Phosphorylation at Ser-803, Ser-814 and Ser-831 regulates PKD2 channel activity. Post-translationally, sumoylated by SUMO1; sumoylation regulates PKD2 membrane recycling and is necessary for intravascular pressure-induced arterial contractility. As to expression, expressed in mesenchymally derived structures in the developing embryo at day 12.5. In adult, mostly expressed in kidney.

It localises to the cell projection. The protein localises to the cilium membrane. The protein resides in the endoplasmic reticulum membrane. Its subcellular location is the cell membrane. It is found in the basolateral cell membrane. It localises to the cytoplasmic vesicle membrane. The protein localises to the golgi apparatus. The protein resides in the vesicle. Its subcellular location is the secreted. It is found in the extracellular exosome. It carries out the reaction K(+)(in) = K(+)(out). The enzyme catalyses Na(+)(in) = Na(+)(out). The catalysed reaction is Ca(2+)(in) = Ca(2+)(out). Its activity is regulated as follows. Channel activity is regulated by phosphorylation. Channel activity is regulated by intracellular Ca(2+). At the endoplasmic reticulum membrane (ER), TMEM33 enhances its channel activity. TMEM120A inhibits the channel activity of PKD2, and mediates mechanosensitivity of the PKD2-TMEM120A channel complex. PKD1/PKD2 complex on the plasma membrane is activated by PKD1 N-terminus. Its function is as follows. Forms a nonselective cation channel. Can function as a homotetrameric ion channel or can form heteromer with PKD1. Displays distinct function depending on its subcellular localization and regulation by its binding partners. Functions as a cation channel, with a preference for monovalent cations over divalent cations that allows K(+), Na(+) and Ca(2+) influx, with low selectivity for Ca(2+). Involved in fluid-flow mechanosensation in the primary cilium in renal epithelium. In the endoplasmic reticulum, likely functions as a K(+) channel to facilitate Ca(2+) release. The heterotetrameric PKD1/PKD2 channel has higher Ca(2+) permeability than homomeric PKD2 channel and acts as a primarily Ca(2+)-permeable channel. Interacts with and acts as a regulator of a number of other channels, such as TRPV4, TRPC1, IP3R, RYR2, ultimately further affecting intracellular signaling, to modulate intracellular Ca(2+) signaling. Together with TRPV4, forms mechano- and thermosensitive channels in cilium. In cardiomyocytes, PKD2 modulates Ca(2+) release from stimulated RYR2 receptors through direct association. Also involved in left-right axis specification via its role in sensing nodal flow; forms a complex with PKD1L1 in cilia to facilitate flow detection in left-right patterning. Acts as a regulator of cilium length together with PKD1. Mediates systemic blood pressure and contributes to the myogenic response in cerebral arteries though vasoconstriction. The sequence is that of Polycystin-2 from Bos taurus (Bovine).